The sequence spans 455 residues: Probable glycine dehydrogenase (decarboxylating) subunit 1 (455 aa).

It belongs to the GcvP family. N-terminal subunit subfamily. The glycine cleavage system is composed of four proteins: P, T, L and H. In this organism, the P 'protein' is a heterodimer of two subunits.

The enzyme catalyses N(6)-[(R)-lipoyl]-L-lysyl-[glycine-cleavage complex H protein] + glycine + H(+) = N(6)-[(R)-S(8)-aminomethyldihydrolipoyl]-L-lysyl-[glycine-cleavage complex H protein] + CO2. The glycine cleavage system catalyzes the degradation of glycine. The P protein binds the alpha-amino group of glycine through its pyridoxal phosphate cofactor; CO(2) is released and the remaining methylamine moiety is then transferred to the lipoamide cofactor of the H protein. The protein is Probable glycine dehydrogenase (decarboxylating) subunit 1 of Saccharolobus islandicus (strain Y.G.57.14 / Yellowstone #1) (Sulfolobus islandicus).